A 1719-amino-acid polypeptide reads, in one-letter code: Cilia- and flagella-associated protein 43 (1719 aa).

Positions 94–120 (VREEGAGGGADKPSGSGAVSGKQQSSG) are disordered. WD repeat units follow at residues 122–165 (SVVL…GRCR), 174–214 (SSTS…EKAV), 226–263 (PAGA…PLQL), 308–345 (TSGA…AAAI), 413–452 (CHVG…LLGR), and 513–552 (LHSA…GRVR). The disordered stretch occupies residues 569–596 (TWPRSDGGSGAASGHAQAGPVSTTSAEG). WD repeat units lie at residues 697 to 736 (AHAR…LAAQ) and 749 to 788 (ITAG…AVAN). Residues 1022–1045 (RAKQEAARKADEDAAKRSAKDNAG) are disordered. One copy of the WD 9 repeat lies at 1073-1114 (PKPAWLVALGVEPDAVNPKLITEEQNRELKEWQAKEKSLQEE). Disordered stretches follow at residues 1220-1269 (MPGG…AAAA), 1277-1296 (ATAA…GAAG), and 1325-1372 (TLNP…AAAA). A compositionally biased stretch (gly residues) spans 1221-1233 (PGGGAIGAAGGHQ). A compositionally biased stretch (low complexity) spans 1257–1269 (ASLAHSPSGAAAA). Residues 1344-1358 (SSALHPSHSHASVHG) show a composition bias toward low complexity. Coiled coils occupy residues 1524–1609 (AAQW…RSAQ) and 1651–1679 (HKKL…RLRT). Residues 1685-1719 (ESGAVAGMPSPPRRLPPDIKLLAGSPSSSSVAGRT) form a disordered region. Polar residues predominate over residues 1709–1719 (SPSSSSVAGRT).

Belongs to the CFAP43 family.

The protein localises to the cell projection. It is found in the cilium. Its subcellular location is the flagellum. The protein resides in the cytoplasm. It localises to the cytoskeleton. The protein localises to the flagellum axoneme. Functionally, flagellar protein involved in flagellum axoneme organization and function. The protein is Cilia- and flagella-associated protein 43 of Chlamydomonas reinhardtii (Chlamydomonas smithii).